We begin with the raw amino-acid sequence, 245 residues long: Triosephosphate isomerase (245 aa).

Position 9-11 (9-11 (NWK)) interacts with substrate. The Electrophile role is filled by H92. E164 functions as the Proton acceptor in the catalytic mechanism. Residues G170, S209, and 230 to 231 (GG) each bind substrate.

The protein belongs to the triosephosphate isomerase family. In terms of assembly, homodimer.

Its subcellular location is the cytoplasm. It carries out the reaction D-glyceraldehyde 3-phosphate = dihydroxyacetone phosphate. The protein operates within carbohydrate biosynthesis; gluconeogenesis. Its pathway is carbohydrate degradation; glycolysis; D-glyceraldehyde 3-phosphate from glycerone phosphate: step 1/1. Functionally, involved in the gluconeogenesis. Catalyzes stereospecifically the conversion of dihydroxyacetone phosphate (DHAP) to D-glyceraldehyde-3-phosphate (G3P). The chain is Triosephosphate isomerase from Cupriavidus pinatubonensis (strain JMP 134 / LMG 1197) (Cupriavidus necator (strain JMP 134)).